A 102-amino-acid chain; its full sequence is Large ribosomal subunit protein uL23 (102 aa).

This sequence belongs to the universal ribosomal protein uL23 family. Part of the 50S ribosomal subunit. Contacts protein L29, and trigger factor when it is bound to the ribosome.

Its function is as follows. One of the early assembly proteins it binds 23S rRNA. One of the proteins that surrounds the polypeptide exit tunnel on the outside of the ribosome. Forms the main docking site for trigger factor binding to the ribosome. This is Large ribosomal subunit protein uL23 from Methylobacillus flagellatus (strain ATCC 51484 / DSM 6875 / VKM B-1610 / KT).